We begin with the raw amino-acid sequence, 232 residues long: Orotidine 5'-phosphate decarboxylase (232 aa).

Residues aspartate 11, lysine 33, aspartate 60–threonine 69, threonine 120, arginine 181, glutamine 191, glycine 211, and arginine 212 each bind substrate. Lysine 62 (proton donor) is an active-site residue.

Belongs to the OMP decarboxylase family. Type 1 subfamily. As to quaternary structure, homodimer.

It catalyses the reaction orotidine 5'-phosphate + H(+) = UMP + CO2. It functions in the pathway pyrimidine metabolism; UMP biosynthesis via de novo pathway; UMP from orotate: step 2/2. Catalyzes the decarboxylation of orotidine 5'-monophosphate (OMP) to uridine 5'-monophosphate (UMP). This Tolumonas auensis (strain DSM 9187 / NBRC 110442 / TA 4) protein is Orotidine 5'-phosphate decarboxylase.